Reading from the N-terminus, the 161-residue chain is 6,7-dimethyl-8-ribityllumazine synthase (161 aa).

Residues Trp26, 58 to 60 (SFE), and 81 to 83 (VVI) contribute to the 5-amino-6-(D-ribitylamino)uracil site. 86–87 (GT) lines the (2S)-2-hydroxy-3-oxobutyl phosphate pocket. Catalysis depends on His89, which acts as the Proton donor. Position 114 (Phe114) interacts with 5-amino-6-(D-ribitylamino)uracil. Arg128 contacts (2S)-2-hydroxy-3-oxobutyl phosphate.

The protein belongs to the DMRL synthase family.

It catalyses the reaction (2S)-2-hydroxy-3-oxobutyl phosphate + 5-amino-6-(D-ribitylamino)uracil = 6,7-dimethyl-8-(1-D-ribityl)lumazine + phosphate + 2 H2O + H(+). It functions in the pathway cofactor biosynthesis; riboflavin biosynthesis; riboflavin from 2-hydroxy-3-oxobutyl phosphate and 5-amino-6-(D-ribitylamino)uracil: step 1/2. Catalyzes the formation of 6,7-dimethyl-8-ribityllumazine by condensation of 5-amino-6-(D-ribitylamino)uracil with 3,4-dihydroxy-2-butanone 4-phosphate. This is the penultimate step in the biosynthesis of riboflavin. The chain is 6,7-dimethyl-8-ribityllumazine synthase from Streptomyces coelicolor (strain ATCC BAA-471 / A3(2) / M145).